We begin with the raw amino-acid sequence, 411 residues long: MSEIKQQDNQVFEAITKEFERQDHHIELIASENFVSKAVMEAQGSVLTNKYAEGYPHRRYYGGCEFVDIVEDLARDRIKELFGAEHVNVQPHSGSQANMAVYRVALKPGDTVLGMNLSHGGHLTHGSSVNFSGVDYNFVAYGVDKETEKIDYDVVRELAREHKPALIIAGASAYSRIIDFEEFKAIADEVGAKLMVDMAHIAGLVAAGLHPNPVPHADFVTTTTHKTLRGPRGGMIICKEEYAKAIDKMIFPGIQGGPLMHVIAAKAVAFGEALTADFKAYQQQVVLNAKTLADALTEKGLRIVSGGTDNHVMSIDVTSFNITGKVAERALDDVGITTNKNTIPFDKESPFVTSGIRIGTPAVTTRGFNEEDMKEIASIIADVLAHPEDENVKHDAKVRVRAITEKYPLYK.

(6S)-5,6,7,8-tetrahydrofolate-binding positions include Leu117 and 121–123; that span reads GHL. The residue at position 226 (Lys226) is an N6-(pyridoxal phosphate)lysine. Residues Glu241 and 349–351 each bind (6S)-5,6,7,8-tetrahydrofolate; that span reads SPF.

Belongs to the SHMT family. As to quaternary structure, homodimer. Pyridoxal 5'-phosphate serves as cofactor.

It localises to the cytoplasm. It carries out the reaction (6R)-5,10-methylene-5,6,7,8-tetrahydrofolate + glycine + H2O = (6S)-5,6,7,8-tetrahydrofolate + L-serine. The protein operates within one-carbon metabolism; tetrahydrofolate interconversion. Its pathway is amino-acid biosynthesis; glycine biosynthesis; glycine from L-serine: step 1/1. Functionally, catalyzes the reversible interconversion of serine and glycine with tetrahydrofolate (THF) serving as the one-carbon carrier. This reaction serves as the major source of one-carbon groups required for the biosynthesis of purines, thymidylate, methionine, and other important biomolecules. Also exhibits THF-independent aldolase activity toward beta-hydroxyamino acids, producing glycine and aldehydes, via a retro-aldol mechanism. This Macrococcus caseolyticus (strain JCSC5402) (Macrococcoides caseolyticum) protein is Serine hydroxymethyltransferase.